The following is a 553-amino-acid chain: uncharacterized protein (553 aa).

The signal sequence occupies residues 1-31; the sequence is MEDIMTSLLVATSRVVVTISLAYVPVKSAFA. The Acyl-ester intermediate role is filled by S207. C275 and C292 form a disulfide bridge. Ca(2+)-binding residues include D276, D279, V281, D283, and L285. Catalysis depends on charge relay system residues D444 and H482. The cysteines at positions 528 and 550 are disulfide-linked.

It belongs to the tannase family.

This is an uncharacterized protein from Agrobacterium fabrum (strain C58 / ATCC 33970) (Agrobacterium tumefaciens (strain C58)).